Consider the following 513-residue polypeptide: 2-isopropylmalate synthase (513 aa).

The Pyruvate carboxyltransferase domain occupies 4 to 268; it reads IKIFDTTLRD…ETGIRTELIY (265 aa). Mn(2+)-binding residues include Asp-13, His-203, His-205, and Asn-239. The regulatory domain stretch occupies residues 392-513; that stretch reads RLVHFHVHTG…GLLRKNGGVE (122 aa).

Belongs to the alpha-IPM synthase/homocitrate synthase family. LeuA type 1 subfamily. Homodimer. Mn(2+) is required as a cofactor.

The protein localises to the cytoplasm. It carries out the reaction 3-methyl-2-oxobutanoate + acetyl-CoA + H2O = (2S)-2-isopropylmalate + CoA + H(+). Its pathway is amino-acid biosynthesis; L-leucine biosynthesis; L-leucine from 3-methyl-2-oxobutanoate: step 1/4. Functionally, catalyzes the condensation of the acetyl group of acetyl-CoA with 3-methyl-2-oxobutanoate (2-ketoisovalerate) to form 3-carboxy-3-hydroxy-4-methylpentanoate (2-isopropylmalate). In Thermotoga neapolitana (strain ATCC 49049 / DSM 4359 / NBRC 107923 / NS-E), this protein is 2-isopropylmalate synthase.